A 476-amino-acid chain; its full sequence is 3-isopropylmalate dehydratase large subunit (476 aa).

The [4Fe-4S] cluster site is built by cysteine 353, cysteine 413, and cysteine 416.

Belongs to the aconitase/IPM isomerase family. LeuC type 1 subfamily. As to quaternary structure, heterodimer of LeuC and LeuD. The cofactor is [4Fe-4S] cluster.

It carries out the reaction (2R,3S)-3-isopropylmalate = (2S)-2-isopropylmalate. The protein operates within amino-acid biosynthesis; L-leucine biosynthesis; L-leucine from 3-methyl-2-oxobutanoate: step 2/4. In terms of biological role, catalyzes the isomerization between 2-isopropylmalate and 3-isopropylmalate, via the formation of 2-isopropylmaleate. The sequence is that of 3-isopropylmalate dehydratase large subunit from Yersinia pseudotuberculosis serotype O:1b (strain IP 31758).